The chain runs to 293 residues: Cytidine deaminase 6 (293 aa).

CMP/dCMP-type deaminase domains are found at residues 16–147 and 178–293; these read RGPS…FGPD and EDCS…TNKN. 57–59 contacts substrate; the sequence is NVE. His-70 serves as a coordination point for Zn(2+). The active-site Proton donor is the Glu-72. Cys-103 and Cys-106 together coordinate Zn(2+).

It belongs to the cytidine and deoxycytidylate deaminase family. In terms of assembly, homodimer. Zn(2+) serves as cofactor.

The catalysed reaction is cytidine + H2O + H(+) = uridine + NH4(+). The enzyme catalyses 2'-deoxycytidine + H2O + H(+) = 2'-deoxyuridine + NH4(+). This enzyme scavenges exogenous and endogenous cytidine and 2'-deoxycytidine for UMP synthesis. The chain is Cytidine deaminase 6 (CDA6) from Arabidopsis thaliana (Mouse-ear cress).